The following is a 1081-amino-acid chain: Isoleucine--tRNA ligase (1081 aa).

The short motif at 53–63 (PFATGLPHYGN) is the 'HIGH' region element. The 'KMSKS' region motif lies at 607-611 (KMSKS). K610 contacts ATP.

The protein belongs to the class-I aminoacyl-tRNA synthetase family.

It carries out the reaction tRNA(Ile) + L-isoleucine + ATP = L-isoleucyl-tRNA(Ile) + AMP + diphosphate. The chain is Isoleucine--tRNA ligase (ILSA) from Tetrahymena thermophila.